The sequence spans 232 residues: Large ribosomal subunit protein uL3 (232 aa).

It belongs to the universal ribosomal protein uL3 family. Part of the 50S ribosomal subunit. Forms a cluster with proteins L14 and L19.

One of the primary rRNA binding proteins, it binds directly near the 3'-end of the 23S rRNA, where it nucleates assembly of the 50S subunit. In Sorangium cellulosum (strain So ce56) (Polyangium cellulosum (strain So ce56)), this protein is Large ribosomal subunit protein uL3.